Here is a 256-residue protein sequence, read N- to C-terminus: Imidazole glycerol phosphate synthase subunit HisF (256 aa).

Residues Asp12 and Asp131 contribute to the active site.

Belongs to the HisA/HisF family. Heterodimer of HisH and HisF.

The protein localises to the cytoplasm. It catalyses the reaction 5-[(5-phospho-1-deoxy-D-ribulos-1-ylimino)methylamino]-1-(5-phospho-beta-D-ribosyl)imidazole-4-carboxamide + L-glutamine = D-erythro-1-(imidazol-4-yl)glycerol 3-phosphate + 5-amino-1-(5-phospho-beta-D-ribosyl)imidazole-4-carboxamide + L-glutamate + H(+). It functions in the pathway amino-acid biosynthesis; L-histidine biosynthesis; L-histidine from 5-phospho-alpha-D-ribose 1-diphosphate: step 5/9. In terms of biological role, IGPS catalyzes the conversion of PRFAR and glutamine to IGP, AICAR and glutamate. The HisF subunit catalyzes the cyclization activity that produces IGP and AICAR from PRFAR using the ammonia provided by the HisH subunit. The chain is Imidazole glycerol phosphate synthase subunit HisF from Bifidobacterium longum (strain NCC 2705).